The following is a 346-amino-acid chain: Zinc transporter YKE4 (346 aa).

Over 1–2 (MK) the chain is Extracellular. A helical membrane pass occupies residues 3 to 23 (ASHICSYLLSIAPLVVSHGVH). Topologically, residues 24 to 69 (HNRDHGHEANHESKQSFLILKQESIFYSLVCFLQNHLFVLGPRYNA) are cytoplasmic. The chain crosses the membrane as a helical span at residues 70–90 (IVAILIIQLMPCLFVLFVPGL). The Extracellular portion of the chain corresponds to 91–99 (RKNDRASLT). A helical membrane pass occupies residues 100–120 (LSLLVSFSLGTLLGDILLHVI). Residues 121 to 126 (PESLSG) lie on the Cytoplasmic side of the membrane. A helical transmembrane segment spans residues 127-147 (VTDVTMVGGAIFLGFISFLTL). The Extracellular portion of the chain corresponds to 148-202 (DKTMRILSGTSNDDGSIHSHSHSHTPQQTAEKKAGFNMSAYLNVISGIAHHITDG). An N-linked (GlcNAc...) asparagine glycan is attached at asparagine 184. Residues 203-223 (IALATSFYSSTQVGIMTSIAV) traverse the membrane as a helical segment. Residues 224-252 (TFHEIPHELGDFAILLSSGFTFPQAIRAQ) are Cytoplasmic-facing. A helical transmembrane segment spans residues 253 to 273 (AVTAFGAVVGTSIGCWMNEIG). Residues asparagine 274 and asparagine 285 are each glycosylated (N-linked (GlcNAc...) asparagine). Over 274–290 (NNSHKATSSSANASELM) the chain is Extracellular. The helical transmembrane segment at 291 to 311 (LPFTAGGLIYIATTSVVPQIL) threads the bilayer. The Cytoplasmic segment spans residues 312–322 (HSSAPDSKLRE). Residues 323–343 (FKKWALQLVFIFVGFAVMALM) traverse the membrane as a helical segment. At 344–346 (DEH) the chain is on the extracellular side.

It belongs to the ZIP transporter (TC 2.A.5) family. KE4/Catsup subfamily.

The protein localises to the endoplasmic reticulum membrane. In terms of biological role, zinc transporter whose role depends on the zinc status of the cells. It helps to balance zinc levels between the cytosol and the secretory pathway. It transports zinc into the secretory pathway in a zinc-adequate environment and in a high zinc medium. In high zinc medium, transport of zinc into the secretory pathway is a way to eliminate zinc from the cytosol. Under low cytosolic zinc conditions, it removes zinc from the secretory pathway and acts as a zinc importer that helps to alleviate ER stress. This Saccharomyces cerevisiae (strain ATCC 204508 / S288c) (Baker's yeast) protein is Zinc transporter YKE4 (YKE4).